Consider the following 343-residue polypeptide: Hydroxymethylglutaryl-CoA synthase (343 aa).

(3S)-3-hydroxy-3-methylglutaryl-CoA-binding residues include D28 and A29. E80 serves as the catalytic Proton donor/acceptor. Residue C112 participates in (3S)-3-hydroxy-3-methylglutaryl-CoA binding. C112 functions as the Acyl-thioester intermediate in the catalytic mechanism. A CoA-binding site is contributed by R198. The (3S)-3-hydroxy-3-methylglutaryl-CoA site is built by T200 and H233. H233 serves as the catalytic Proton donor/acceptor. Residue K238 coordinates CoA. (3S)-3-hydroxy-3-methylglutaryl-CoA is bound by residues R242, N265, and S295.

This sequence belongs to the thiolase-like superfamily. Archaeal HMG-CoA synthase family. As to quaternary structure, interacts with acetoacetyl-CoA thiolase that catalyzes the precedent step in the pathway and with a DUF35 protein. The acetoacetyl-CoA thiolase/HMG-CoA synthase complex channels the intermediate via a fused CoA-binding site, which allows for efficient coupling of the endergonic thiolase reaction with the exergonic HMGCS reaction.

It catalyses the reaction acetoacetyl-CoA + acetyl-CoA + H2O = (3S)-3-hydroxy-3-methylglutaryl-CoA + CoA + H(+). The protein operates within metabolic intermediate biosynthesis; (R)-mevalonate biosynthesis; (R)-mevalonate from acetyl-CoA: step 2/3. In terms of biological role, catalyzes the condensation of acetyl-CoA with acetoacetyl-CoA to form 3-hydroxy-3-methylglutaryl-CoA (HMG-CoA). Functions in the mevalonate (MVA) pathway leading to isopentenyl diphosphate (IPP), a key precursor for the biosynthesis of isoprenoid compounds that are building blocks of archaeal membrane lipids. The protein is Hydroxymethylglutaryl-CoA synthase of Archaeoglobus fulgidus (strain ATCC 49558 / DSM 4304 / JCM 9628 / NBRC 100126 / VC-16).